The primary structure comprises 76 residues: Acyl carrier protein (76 aa).

One can recognise a Carrier domain in the interval 1 to 76 (MSLEEKVKNI…DVIEYIKAHT (76 aa)). S36 is subject to O-(pantetheine 4'-phosphoryl)serine.

The protein belongs to the acyl carrier protein (ACP) family. In terms of processing, 4'-phosphopantetheine is transferred from CoA to a specific serine of apo-ACP by AcpS. This modification is essential for activity because fatty acids are bound in thioester linkage to the sulfhydryl of the prosthetic group.

Its subcellular location is the cytoplasm. The protein operates within lipid metabolism; fatty acid biosynthesis. Functionally, carrier of the growing fatty acid chain in fatty acid biosynthesis. The protein is Acyl carrier protein of Desulfatibacillum aliphaticivorans.